We begin with the raw amino-acid sequence, 582 residues long: TRAF-type zinc finger domain-containing protein 1 (582 aa).

The residue at position 2 (Ala2) is an N-acetylalanine. The segment at 27–103 adopts a TRAF-type zinc-finger fold; sequence IHEIHCQRNI…DLELSILKLK (77 aa). Ser191 is subject to Phosphoserine. The disordered stretch occupies residues 217 to 236; that stretch reads EQERQERNRGQQPPKEGGEE. Ser278, Ser320, Ser326, Ser327, Ser409, Ser415, Ser430, and Ser470 each carry phosphoserine. Residues 401–582 form a disordered region; sequence TEGIPRLDSQ…AGDAEEEEEE (182 aa). 2 stretches are compositionally biased toward polar residues: residues 454–471 and 486–495; these read PINNMTATYNQLSRSTSG and LSNSDSQDIQ.

In terms of assembly, interacts with MAVS, TICAM1, TRAF1, TRAF2, TRAF3. Interacts with TRAF6.

In terms of biological role, negative feedback regulator that controls excessive innate immune responses. Regulates both Toll-like receptor 4 (TLR4) and DDX58/RIG1-like helicases (RLH) pathways. May inhibit the LTR pathway by direct interaction with TRAF6 and attenuation of NF-kappa-B activation. May negatively regulate the RLH pathway downstream from MAVS and upstream of NF-kappa-B and IRF3. This Homo sapiens (Human) protein is TRAF-type zinc finger domain-containing protein 1 (TRAFD1).